Here is an 80-residue protein sequence, read N- to C-terminus: uncharacterized protein (80 aa).

This is an uncharacterized protein from Homo sapiens (Human).